We begin with the raw amino-acid sequence, 55 residues long: Metallothionein-3 (55 aa).

It belongs to the metallothionein superfamily. Type 11 family.

The sequence is that of Metallothionein-3 (MTP3) from Yarrowia lipolytica (strain CLIB 122 / E 150) (Yeast).